We begin with the raw amino-acid sequence, 124 residues long: Protein YobA (124 aa).

The N-terminal stretch at Met1 to Ala26 is a signal peptide. 2 residues coordinate Cu cation: His27 and His113.

It belongs to the CopC family.

The protein localises to the periplasm. This chain is Protein YobA (yobA), found in Escherichia coli O6:H1 (strain CFT073 / ATCC 700928 / UPEC).